Here is a 192-residue protein sequence, read N- to C-terminus: Acetyltransferase PA3944 (192 aa).

The region spanning 18–187 (LLLRAWRDSD…RHILYRVDAA (170 aa)) is the N-acetyltransferase domain. CoA-binding positions include 105-107 (WRL), Gly113, Asn145, and 150-152 (GLM).

Functionally, catalyzes the transfer of an acetyl group from acetyl coenzyme A (AcCoA) to an acceptor substrate and releases both CoA and the acetylated product. It prefers the peptide Asp-Phe methyl ester (or aspartame) and the peptide antibiotics polymyxin B and colistin. Other substrates like dopamine, serotonin, puromycin, chloramphenicol, D-glucosamine, glycine and N-alpha-acetyl-L-glutamine are used and displayed lower activity. The polypeptide is Acetyltransferase PA3944 (Pseudomonas aeruginosa (strain ATCC 15692 / DSM 22644 / CIP 104116 / JCM 14847 / LMG 12228 / 1C / PRS 101 / PAO1)).